Here is a 478-residue protein sequence, read N- to C-terminus: Proline--tRNA ligase (478 aa).

The protein belongs to the class-II aminoacyl-tRNA synthetase family. ProS type 3 subfamily. As to quaternary structure, homodimer.

The protein resides in the cytoplasm. The enzyme catalyses tRNA(Pro) + L-proline + ATP = L-prolyl-tRNA(Pro) + AMP + diphosphate. Catalyzes the attachment of proline to tRNA(Pro) in a two-step reaction: proline is first activated by ATP to form Pro-AMP and then transferred to the acceptor end of tRNA(Pro). The polypeptide is Proline--tRNA ligase (Clostridium botulinum (strain Okra / Type B1)).